The sequence spans 116 residues: MIVIESKKKKNIHAFSYPLSPYLFFSSNFGSVHILFKINSAVILSLLLDFAEISFSFDADSLIKSFCLLRPSSREMMLTNAHPFRYSSLSSTLLKAFFNAFSKSSVLVCFLLRRAS.

This is an uncharacterized protein from Saccharomyces cerevisiae (strain ATCC 204508 / S288c) (Baker's yeast).